A 366-amino-acid polypeptide reads, in one-letter code: ERCC4 domain-containing protein EP364R (366 aa).

The ERCC4 domain maps to 3–101 (FLVADHREHH…QLYFFVEGPA (99 aa)). 2 stretches are compositionally biased toward polar residues: residues 320–331 (RPTMQVATQPAA) and 349–366 (PTGH…TVRC). The segment at 320 to 366 (RPTMQVATQPAATQPLHKVSDDASSDASSPTGHQTLSKEMSLNTVRC) is disordered.

This sequence belongs to the asfivirus EP364R family.

Functionally, plays a role in the inhibition of type I interferon signaling pathway. Mechanistically, specifically interacts with 2',3'-cGAMP and cleaves it via its phosphodiesterase activity. In turn, prevents 2',3'-cGAMP interaction with host ER-resident STING1 leading to inhibition of downstream signaling pathway and type I interferon production. This Ornithodoros (relapsing fever ticks) protein is ERCC4 domain-containing protein EP364R.